Consider the following 426-residue polypeptide: D-cysteine desulfhydrase 1, mitochondrial (426 aa).

The transit peptide at 1-63 (MARGAHQAPG…IGSFLSKRPY (63 aa)) directs the protein to the mitochondrion. Lys-119 bears the N6-(pyridoxal phosphate)lysine mark. Ser-146 functions as the Nucleophile in the catalytic mechanism.

This sequence belongs to the ACC deaminase/D-cysteine desulfhydrase family. In terms of assembly, homodimer. It depends on pyridoxal 5'-phosphate as a cofactor. In terms of tissue distribution, present in seeds (at protein level).

Its subcellular location is the mitochondrion. It carries out the reaction D-cysteine + H2O = hydrogen sulfide + pyruvate + NH4(+) + H(+). Inhibited by L-cysteine (L-cys). Catalyzes the production of hydrogen sulfide (H2S) from D-cysteine (D-cys). The protein is D-cysteine desulfhydrase 1, mitochondrial of Oryza sativa subsp. japonica (Rice).